Reading from the N-terminus, the 361-residue chain is tRNA/tmRNA (uracil-C(5))-methyltransferase (361 aa).

S-adenosyl-L-methionine is bound by residues Q185, Y213, N218, E234, and D294. The active-site Nucleophile is the C319. The Proton acceptor role is filled by E353.

This sequence belongs to the class I-like SAM-binding methyltransferase superfamily. RNA M5U methyltransferase family. TrmA subfamily.

It carries out the reaction uridine(54) in tRNA + S-adenosyl-L-methionine = 5-methyluridine(54) in tRNA + S-adenosyl-L-homocysteine + H(+). The enzyme catalyses uridine(341) in tmRNA + S-adenosyl-L-methionine = 5-methyluridine(341) in tmRNA + S-adenosyl-L-homocysteine + H(+). Dual-specificity methyltransferase that catalyzes the formation of 5-methyluridine at position 54 (m5U54) in all tRNAs, and that of position 341 (m5U341) in tmRNA (transfer-mRNA). This Pseudomonas putida (strain W619) protein is tRNA/tmRNA (uracil-C(5))-methyltransferase.